Consider the following 353-residue polypeptide: 3-dehydroquinate synthase (353 aa).

Residues 60 to 65, 94 to 98, 118 to 119, Lys-131, and Lys-140 each bind NAD(+); these read AGDMNK, GMITD, and TT. Residues Glu-173, His-234, and His-253 each contribute to the Zn(2+) site.

Belongs to the sugar phosphate cyclases superfamily. Dehydroquinate synthase family. The cofactor is NAD(+). Co(2+) is required as a cofactor. It depends on Zn(2+) as a cofactor.

It localises to the cytoplasm. It catalyses the reaction 7-phospho-2-dehydro-3-deoxy-D-arabino-heptonate = 3-dehydroquinate + phosphate. It functions in the pathway metabolic intermediate biosynthesis; chorismate biosynthesis; chorismate from D-erythrose 4-phosphate and phosphoenolpyruvate: step 2/7. In terms of biological role, catalyzes the conversion of 3-deoxy-D-arabino-heptulosonate 7-phosphate (DAHP) to dehydroquinate (DHQ). This Parabacteroides distasonis (strain ATCC 8503 / DSM 20701 / CIP 104284 / JCM 5825 / NCTC 11152) protein is 3-dehydroquinate synthase.